The sequence spans 1197 residues: Neural cell adhesion molecule L1.1 (1197 aa).

Ig-like C2-type domains lie at 1–58 (EFRQ…TAVS), 69–160 (PSLA…EPMS), 165–263 (PSNS…YTVT), 268–355 (PYWT…THVH), and 360–442 (PAQI…KSIS). Residues 1 to 1054 (EFRQRDPSPS…SPRNFATEGW (1054 aa)) are Extracellular-facing. The cysteines at positions 92 and 143 are disulfide-linked. 8 N-linked (GlcNAc...) asparagine glycosylation sites follow: asparagine 135, asparagine 149, asparagine 221, asparagine 298, asparagine 414, asparagine 421, asparagine 438, and asparagine 449. 3 disulfide bridges follow: cysteine 199–cysteine 247, cysteine 289–cysteine 339, and cysteine 383–cysteine 432. The region spanning 451 to 541 (TKIVGPPQNL…DSDTASGYIT (91 aa)) is the Ig-like C2-type 6 domain. Cysteine 472 and cysteine 525 are oxidised to a cystine. 5 Fibronectin type-III domains span residues 548–643 (PPQS…TPAA), 645–742 (PDTN…SGED), 747–852 (APSA…TPEG), 853–952 (APGP…LLDG), and 953–1048 (EPPS…SPRN). The segment covering 630–640 (APTESSLSYST) has biased composition (polar residues). Positions 630–655 (APTESSLSYSTPAAKPDTNPENVMTL) are disordered. Residue asparagine 708 is glycosylated (N-linked (GlcNAc...) asparagine). 4 N-linked (GlcNAc...) asparagine glycosylation sites follow: asparagine 959, asparagine 968, asparagine 1002, and asparagine 1027. A helical transmembrane segment spans residues 1055–1075 (FIGLISALVLLLLVLLLLCYI). Residues 1076 to 1197 (KKSKGGKYSV…TSVTGILGPN (122 aa)) lie on the Cytoplasmic side of the membrane. Disordered regions lie at residues 1115–1135 (MEKC…SNDS) and 1154–1197 (IGQY…LGPN).

It belongs to the immunoglobulin superfamily. L1/neurofascin/NgCAM family. As to expression, expressed in postmitotic neurons in 16-36 hours embryos, including those in the brain, cranial ganglia and otic and olfactory placodes, and in all classes of spinal neurons.

The protein resides in the cell membrane. The protein localises to the cell projection. Its subcellular location is the growth cone. Cell adhesion molecule with an important role in the development of the nervous system. Involved in neuron-neuron adhesion, neurite fasciculation, outgrowth of neurites, etc. Binds to axonin on neurons. The sequence is that of Neural cell adhesion molecule L1.1 (nadl1.1) from Danio rerio (Zebrafish).